The primary structure comprises 238 residues: Probable transcriptional regulatory protein YeeN (238 aa).

Belongs to the TACO1 family. YeeN subfamily.

The protein resides in the cytoplasm. This is Probable transcriptional regulatory protein YeeN from Escherichia coli O157:H7.